Consider the following 273-residue polypeptide: Shikimate dehydrogenase (NADP(+)) (273 aa).

Shikimate contacts are provided by residues 14 to 16 and T61; that span reads SKS. K65 functions as the Proton acceptor in the catalytic mechanism. Residues N86 and D102 each contribute to the shikimate site. NADP(+) contacts are provided by residues 126 to 130, 150 to 155, and M213; these read GAGGA and NRTHAR. A shikimate-binding site is contributed by Y215. NADP(+) is bound at residue G237.

Belongs to the shikimate dehydrogenase family. As to quaternary structure, homodimer.

It catalyses the reaction shikimate + NADP(+) = 3-dehydroshikimate + NADPH + H(+). Its pathway is metabolic intermediate biosynthesis; chorismate biosynthesis; chorismate from D-erythrose 4-phosphate and phosphoenolpyruvate: step 4/7. Its function is as follows. Involved in the biosynthesis of the chorismate, which leads to the biosynthesis of aromatic amino acids. Catalyzes the reversible NADPH linked reduction of 3-dehydroshikimate (DHSA) to yield shikimate (SA). The sequence is that of Shikimate dehydrogenase (NADP(+)) from Aeromonas hydrophila subsp. hydrophila (strain ATCC 7966 / DSM 30187 / BCRC 13018 / CCUG 14551 / JCM 1027 / KCTC 2358 / NCIMB 9240 / NCTC 8049).